Reading from the N-terminus, the 179-residue chain is Large ribosomal subunit protein uL5 (179 aa).

Belongs to the universal ribosomal protein uL5 family. Part of the 50S ribosomal subunit; part of the 5S rRNA/L5/L18/L25 subcomplex. Contacts the 5S rRNA and the P site tRNA. Forms a bridge to the 30S subunit in the 70S ribosome.

Functionally, this is one of the proteins that bind and probably mediate the attachment of the 5S RNA into the large ribosomal subunit, where it forms part of the central protuberance. In the 70S ribosome it contacts protein S13 of the 30S subunit (bridge B1b), connecting the 2 subunits; this bridge is implicated in subunit movement. Contacts the P site tRNA; the 5S rRNA and some of its associated proteins might help stabilize positioning of ribosome-bound tRNAs. The chain is Large ribosomal subunit protein uL5 from Yersinia enterocolitica serotype O:8 / biotype 1B (strain NCTC 13174 / 8081).